A 519-amino-acid polypeptide reads, in one-letter code: bZIP transcription factor 30 (519 aa).

5 disordered regions span residues 1-30 (MGGG…IPKH), 45-83 (FRHP…QPSS), 108-202 (TGAG…RKPE), 222-295 (VLNS…TGRH), and 315-339 (SSLK…NSSA). The segment covering 51 to 61 (GAPPPPIPPIS) has biased composition (pro residues). The segment covering 149–173 (SDVTFGFSSMMSQNQKSPPLSSLER) has biased composition (polar residues). Residues 187–202 (VKKEPREGFYKGRKPE) are compositionally biased toward basic and acidic residues. 2 stretches are compositionally biased toward low complexity: residues 244-268 (SRGS…SASG) and 317-329 (LKLP…KVSP). A compositionally biased stretch (polar residues) spans 330–339 (TNSGEGNSSA). The tract at residues 372–393 (KRVKRILANRVSAARSKERKTR) is basic motif. The stretch at 386-460 (RSKERKTRYM…SEKLNEEVQR (75 aa)) forms a coiled coil. Positions 398-433 (LEHKVQTLQTEATTLSAQLTHLQRDSMGLTNQNSEL) are leucine-zipper. The segment at 465–519 (IGEPNRRQSGSSSSESKMSLNPEMFQQLSISQLQHQQMQHSNQCSTMKAKHTSND) is disordered. Low complexity-rich tracts occupy residues 473-483 (SGSSSSESKMS) and 490-509 (QQLS…NQCS).

As to quaternary structure, interacts with WUS, HEC1, KNAT1, KNAT2, HAT1, BEL1, and NGA1. As to expression, expressed in inflorescence meristem, floral organ primordia, gynoecia, ovules and carpel margin meristem.

The protein localises to the nucleus. In terms of biological role, transcription factor that acts as a repressor of reproductive development, meristem size and plant growth. Acts as a transcriptional repressor in inflorescence tissues. Interacts with well known regulators of meristem and gynoecium development such as WUS, HEC1, KNAT1, KNAT2, HAT1, BEL1 and NGA1. Acts as a positive regulator of JAG and OFP1 expression in developing gynoecia. The sequence is that of bZIP transcription factor 30 from Arabidopsis thaliana (Mouse-ear cress).